Consider the following 217-residue polypeptide: Ras-related protein RABA2d (217 aa).

19-26 (GDSGVGKT) contacts GTP. An Effector region motif is present at residues 41–49 (SKSTIGVEF). Residues 67-71 (DTAGQ), 125-128 (NKAD), and 155-156 (SA) contribute to the GTP site. Positions 196–217 (GQGTTINVEDTSGAGKRGCCST) are disordered. 2 S-geranylgeranyl cysteine lipidation sites follow: C214 and C215.

This sequence belongs to the small GTPase superfamily. Rab family. As to expression, expressed in root tips.

The protein localises to the endosome membrane. It is found in the golgi apparatus. Its subcellular location is the trans-Golgi network membrane. Its function is as follows. Intracellular vesicle trafficking and protein transport. The chain is Ras-related protein RABA2d (RABA2D) from Arabidopsis thaliana (Mouse-ear cress).